The sequence spans 269 residues: 4-hydroxy-tetrahydrodipicolinate reductase (269 aa).

NAD(+) contacts are provided by residues 8 to 13 and Glu-34; that span reads GAAGRM. NADP(+) is bound at residue Arg-35. NAD(+) is bound by residues 98–100 and 122–125; these read GTT and APNY. His-155 acts as the Proton donor/acceptor in catalysis. His-156 serves as a coordination point for (S)-2,3,4,5-tetrahydrodipicolinate. The Proton donor role is filled by Lys-159. 165 to 166 lines the (S)-2,3,4,5-tetrahydrodipicolinate pocket; the sequence is GT.

It belongs to the DapB family.

Its subcellular location is the cytoplasm. The enzyme catalyses (S)-2,3,4,5-tetrahydrodipicolinate + NAD(+) + H2O = (2S,4S)-4-hydroxy-2,3,4,5-tetrahydrodipicolinate + NADH + H(+). It carries out the reaction (S)-2,3,4,5-tetrahydrodipicolinate + NADP(+) + H2O = (2S,4S)-4-hydroxy-2,3,4,5-tetrahydrodipicolinate + NADPH + H(+). Its pathway is amino-acid biosynthesis; L-lysine biosynthesis via DAP pathway; (S)-tetrahydrodipicolinate from L-aspartate: step 4/4. In terms of biological role, catalyzes the conversion of 4-hydroxy-tetrahydrodipicolinate (HTPA) to tetrahydrodipicolinate. The chain is 4-hydroxy-tetrahydrodipicolinate reductase from Vibrio atlanticus (strain LGP32) (Vibrio splendidus (strain Mel32)).